The chain runs to 247 residues: 2,3-bisphosphoglycerate-dependent phosphoglycerate mutase (247 aa).

Substrate is bound by residues 8–15 (RHGESQWN), 21–22 (TG), Arg-60, 87–90 (ERHY), Lys-98, 114–115 (RR), and 183–184 (GN). His-9 functions as the Tele-phosphohistidine intermediate in the catalytic mechanism. Residue Glu-87 is the Proton donor/acceptor of the active site.

It belongs to the phosphoglycerate mutase family. BPG-dependent PGAM subfamily.

It carries out the reaction (2R)-2-phosphoglycerate = (2R)-3-phosphoglycerate. It participates in carbohydrate degradation; glycolysis; pyruvate from D-glyceraldehyde 3-phosphate: step 3/5. Functionally, catalyzes the interconversion of 2-phosphoglycerate and 3-phosphoglycerate. The chain is 2,3-bisphosphoglycerate-dependent phosphoglycerate mutase from Chlorobium limicola (strain DSM 245 / NBRC 103803 / 6330).